A 328-amino-acid polypeptide reads, in one-letter code: GMP reductase (328 aa).

Cys176 functions as the Thioimidate intermediate in the catalytic mechanism. Position 205 to 228 (205 to 228 (IIADGGIRTHGDVAKSIRFGATMV)) interacts with NADP(+).

This sequence belongs to the IMPDH/GMPR family. GuaC type 2 subfamily.

The catalysed reaction is IMP + NH4(+) + NADP(+) = GMP + NADPH + 2 H(+). Its function is as follows. Catalyzes the irreversible NADPH-dependent deamination of GMP to IMP. It functions in the conversion of nucleobase, nucleoside and nucleotide derivatives of G to A nucleotides, and in maintaining the intracellular balance of A and G nucleotides. The protein is GMP reductase of Bacillus cereus (strain ATCC 14579 / DSM 31 / CCUG 7414 / JCM 2152 / NBRC 15305 / NCIMB 9373 / NCTC 2599 / NRRL B-3711).